Reading from the N-terminus, the 392-residue chain is Bifunctional enzyme Fae/Hps (392 aa).

The tract at residues 1-161 (MFQIGEALMG…EESNKSTHAI (161 aa)) is formaldehyde-activating enzyme. H17 functions as the Proton donor in the catalytic mechanism. Positions 19, 48, 66, 68, and 83 each coordinate substrate. The interval 162-392 (MGFKVTRLWD…IDQFRVMTDF (231 aa)) is 3-hexulose-6-phosphate synthase.

In the N-terminal section; belongs to the formaldehyde-activating enzyme family. This sequence in the C-terminal section; belongs to the HPS/KGPDC family. HPS subfamily.

The enzyme catalyses 5,6,7,8-tetrahydromethanopterin + formaldehyde = 5,10-methylenetetrahydromethanopterin + H2O. It catalyses the reaction D-ribulose 5-phosphate + formaldehyde = D-arabino-hex-3-ulose 6-phosphate. Its pathway is carbohydrate biosynthesis; D-ribose 5-phosphate biosynthesis. Its function is as follows. Catalyzes the condensation of formaldehyde with tetrahydromethanopterin (H(4)MPT) to 5,10-methylenetetrahydromethanopterin. Catalyzes the reversible formation of ribulose-5-phosphate and formaldehyde from 3-hexulose-6-phosphate. This Methanosarcina barkeri (strain Fusaro / DSM 804) protein is Bifunctional enzyme Fae/Hps.